Reading from the N-terminus, the 330-residue chain is Glycerol-3-phosphate dehydrogenase [NAD(P)+] (330 aa).

Residues Ser-10, Trp-11, Arg-31, and Lys-104 each coordinate NADPH. Sn-glycerol 3-phosphate-binding residues include Lys-104, Gly-131, and Ser-133. Ala-135 is an NADPH binding site. Sn-glycerol 3-phosphate is bound by residues Lys-186, Asp-239, Ser-249, Arg-250, and Asn-251. The active-site Proton acceptor is the Lys-186. Arg-250 contributes to the NADPH binding site. Val-274 and Glu-276 together coordinate NADPH.

Belongs to the NAD-dependent glycerol-3-phosphate dehydrogenase family.

The protein localises to the cytoplasm. The catalysed reaction is sn-glycerol 3-phosphate + NAD(+) = dihydroxyacetone phosphate + NADH + H(+). The enzyme catalyses sn-glycerol 3-phosphate + NADP(+) = dihydroxyacetone phosphate + NADPH + H(+). The protein operates within membrane lipid metabolism; glycerophospholipid metabolism. Catalyzes the reduction of the glycolytic intermediate dihydroxyacetone phosphate (DHAP) to sn-glycerol 3-phosphate (G3P), the key precursor for phospholipid synthesis. In Thermoanaerobacter sp. (strain X514), this protein is Glycerol-3-phosphate dehydrogenase [NAD(P)+].